A 252-amino-acid chain; its full sequence is Adaptation to cold protein B (252 aa).

As to quaternary structure, interacts with AtcC, but not with AtcA and AtcJ. Interacts with the RNA polymerase subunits RpoB and RpoC.

Its function is as follows. Involved in cold adaptation. Directly interacts with the RNA polymerase and decreases its activity. May direct the DnaK chaperone to the RNA polymerase to sustain life at low temperatures. Overproduction prevents bacterial growth due to RNA polymerase inhibition. This chain is Adaptation to cold protein B, found in Shewanella oneidensis (strain ATCC 700550 / JCM 31522 / CIP 106686 / LMG 19005 / NCIMB 14063 / MR-1).